Consider the following 294-residue polypeptide: MPRGDSEQVRYCARFSYLWLKFSLVIYSTVFWLIGGLVLSVGIYAEVERQKYKTLESAFLAPAIILILLGVVMFIVSFIGVLASLRDNLCLLQAFMYILGICLIIELIGGVVALIFRNQTIDFLNDNIRRGIENYYDDLDFKNIMDFVQKEFKCCGGEDYRDWSKNQYHDCRAPGPLACGVPYTCCFRNTTEVVNTMCGYKTIDKERLSVQNVIYVRGCTNAVLMWFTDNYTIMAGVLLGILLPQFLGVLLTFLYITRVEDIITEHSVTDGLLGPGTKAGVEAAGTGCCMCYPI.

Residues 1-23 (MPRGDSEQVRYCARFSYLWLKFS) lie on the Cytoplasmic side of the membrane. A helical transmembrane segment spans residues 24–44 (LVIYSTVFWLIGGLVLSVGIY). At 45–62 (AEVERQKYKTLESAFLAP) the chain is on the extracellular side. A helical membrane pass occupies residues 63–83 (AIILILLGVVMFIVSFIGVLA). At 84 to 93 (SLRDNLCLLQ) the chain is on the cytoplasmic side. Residues 94 to 114 (AFMYILGICLIIELIGGVVAL) traverse the membrane as a helical segment. At 115 to 235 (IFRNQTIDFL…WFTDNYTIMA (121 aa)) the chain is on the extracellular side. N-linked (GlcNAc...) asparagine glycosylation occurs at asparagine 118. 4 disulfides stabilise this stretch: cysteine 154-cysteine 219, cysteine 155-cysteine 185, cysteine 171-cysteine 179, and cysteine 186-cysteine 198. 2 N-linked (GlcNAc...) asparagine glycosylation sites follow: asparagine 189 and asparagine 230. A helical membrane pass occupies residues 236 to 256 (GVLLGILLPQFLGVLLTFLYI). Residues 257 to 294 (TRVEDIITEHSVTDGLLGPGTKAGVEAAGTGCCMCYPI) lie on the Cytoplasmic side of the membrane.

The protein belongs to the tetraspanin (TM4SF) family. As to quaternary structure, interacts with ADAM10; the interaction influences ADAM10 substrate specificity, endocytosis and turnover. Palmitoylated.

Its subcellular location is the cell membrane. The protein resides in the late endosome membrane. In terms of biological role, part of TspanC8 subgroup, composed of 6 members that interact with the transmembrane metalloprotease ADAM10. This interaction is required for ADAM10 exit from the endoplasmic reticulum and for enzymatic maturation and trafficking to the cell surface as well as substrate specificity. Different TspanC8/ADAM10 complexes have distinct substrates. Promotes ADAM10-mediated cleavage of CDH2. Negatively regulates ligand-induced Notch activity probably by regulating ADAM10 activity. The polypeptide is Tetraspanin-15 (TSPAN15) (Bos taurus (Bovine)).